A 201-amino-acid polypeptide reads, in one-letter code: MININNNMKTIIILTIMILTIIIFTRTINGLQLEPVKFMNQKSGLIEIASNNLNLQSLTTSVKNGLIAKSVNLNDNFINSVSNEIYLALGVTNTNVQRMTWQVNIASNVGTMDVFYIEATIGEKFVVINFHTIQITQPMPQLYDVVEKCERTGSRRYGIAGPRARECRYHNVPRSLNTDELTLVTKTLESKVQEAIKIMLQ.

The helical transmembrane segment at 11–31 (IIILTIMILTIIIFTRTINGL) threads the bilayer.

The protein localises to the membrane. This is an uncharacterized protein from Acanthamoeba polyphaga mimivirus (APMV).